Consider the following 111-residue polypeptide: Ig kappa chain V-III region PC 7769 (111 aa).

The tract at residues 1–23 (DIVLTQSPASLAVSLGQRATISC) is framework-1. Cys23 and Cys92 are oxidised to a cystine. The complementarity-determining-1 stretch occupies residues 24-38 (KASQSVDYDGDSYMN). The interval 39–53 (WYQQKPGQPPKVLIF) is framework-2. The interval 54 to 60 (AASNLES) is complementarity-determining-2. The framework-3 stretch occupies residues 61 to 92 (GIPARFSGSGSGTDFTLNIHPVEEEDAATYYC). Residues 93–101 (QQSNEDPWT) form a complementarity-determining-3 region. Positions 102–111 (FGSGTKLEIK) are framework-4.

The sequence is that of Ig kappa chain V-III region PC 7769 from Mus musculus (Mouse).